The following is a 234-amino-acid chain: MNQRINSYKMFGHNPKRSILSGDGTKLEVQSIFKTIQGEGIFVGYPSIFIRLGGCNLACNFCDTEFEDFKLIDIDQILNKVKNLSLNSKNAKTINLVVITGGEPMRQPIGLLCQKLLDQDFKVQIETNGTLYRSLPKEVFIVCSPKVGKTGYNKIREDLLPQISAVKFIISKNIVEYSIIPEVGQSAYDIPVFVQSMDQNDKRLNNENNELAVKLALESGARLSLQTHKFLGIE.

Substrate-binding positions include I36–G38 and R51. The 193-residue stretch at F42 to E234 folds into the Radical SAM core domain. 3 residues coordinate [4Fe-4S] cluster: C55, C59, and C62. Mg(2+) is bound at residue T64. T100 lines the substrate pocket. S-adenosyl-L-methionine-binding positions include G102, S144 to K146, and Q195 to D198.

This sequence belongs to the radical SAM superfamily. 7-carboxy-7-deazaguanine synthase family. As to quaternary structure, homodimer. Requires [4Fe-4S] cluster as cofactor. The cofactor is S-adenosyl-L-methionine. Mg(2+) serves as cofactor.

It carries out the reaction 6-carboxy-5,6,7,8-tetrahydropterin + H(+) = 7-carboxy-7-deazaguanine + NH4(+). The protein operates within purine metabolism; 7-cyano-7-deazaguanine biosynthesis. In terms of biological role, catalyzes the complex heterocyclic radical-mediated conversion of 6-carboxy-5,6,7,8-tetrahydropterin (CPH4) to 7-carboxy-7-deazaguanine (CDG), a step common to the biosynthetic pathways of all 7-deazapurine-containing compounds. In Rickettsia prowazekii (strain Madrid E), this protein is 7-carboxy-7-deazaguanine synthase.